The primary structure comprises 39 residues: APERGLFLNLSAGELCVGSFQCKSSCCQRETGLSLARCA.

2 disulfides stabilise this stretch: cysteine 16-cysteine 27 and cysteine 22-cysteine 38.

It belongs to the colipase family. As to quaternary structure, forms a 1:1 stoichiometric complex with pancreatic lipase. Expressed by the pancreas.

Its subcellular location is the secreted. In terms of biological role, colipase is a cofactor of pancreatic lipase. It allows the lipase to anchor itself to the lipid-water interface. Without colipase the enzyme is washed off by bile salts, which have an inhibitory effect on the lipase. This Squalus acanthias (Spiny dogfish) protein is Colipase.